The following is a 96-amino-acid chain: Small ribosomal subunit protein bS6 (96 aa).

The protein belongs to the bacterial ribosomal protein bS6 family.

In terms of biological role, binds together with bS18 to 16S ribosomal RNA. This chain is Small ribosomal subunit protein bS6, found in Thermobifida fusca (strain YX).